Here is a 128-residue protein sequence, read N- to C-terminus: MVLHGQISGIEIPATDVERAAKFYSDTFGWKFQAPANGTIPASKMQTFTAPGDIFPDEGVVSKVEEIPKSGAKFYINVDDLKATIEAVTKNGGKQLSDVISLGPHVPPFQFFHDTEGNTHAICTRPGK.

The VOC domain maps to 6–125 (QISGIEIPAT…EGNTHAICTR (120 aa)).

It functions in the pathway mycotoxin biosynthesis. Its function is as follows. Glyoxylase-like domain-containing protein; part of the gene cluster that mediates the biosynthesis of the selective antifungal agent ascochitine, an o-quinone methide that plays a possible protective role against other microbial competitors in nature and is considered to be important for pathogenicity of legume-associated Didymella species. The pathway probably begins with the synthesis of a keto-aldehyde intermediate by the ascochitine non-reducing polyketide synthase pksAC from successive condensations of 4 malonyl-CoA units, presumably with a simple acetyl-CoA starter unit. Release of the keto-aldehyde intermediate is consistent with the presence of the C-terminal reductive release domain. The HR-PKS (orf7) probably makes a diketide starter unit which is passed to the non-reducing polyketide synthase pksAC for further extension, producing ascochital and ascochitine. The aldehyde dehydrogenase (orf1), the 2-oxoglutarate-dependent dioxygenase (orf3) and the dehydrogenase (orf9) are probably involved in subsequent oxidations of methyl groups to the carboxylic acid of the heterocyclic ring. The ascochitine gene cluster also includes a gene encoding a short peptide with a cupin domain (orf2) that is often found in secondary metabolite gene clusters and which function has still to be determined. The chain is Glyoxylase-like domain-containing protein from Didymella fabae (Leaf and pod spot disease fungus).